The chain runs to 503 residues: Probable cytosol aminopeptidase (503 aa).

Positions 274 and 279 each coordinate Mn(2+). The active site involves Lys-286. Mn(2+)-binding residues include Asp-297, Asp-356, and Glu-358. Arg-360 is an active-site residue.

This sequence belongs to the peptidase M17 family. It depends on Mn(2+) as a cofactor.

Its subcellular location is the cytoplasm. The enzyme catalyses Release of an N-terminal amino acid, Xaa-|-Yaa-, in which Xaa is preferably Leu, but may be other amino acids including Pro although not Arg or Lys, and Yaa may be Pro. Amino acid amides and methyl esters are also readily hydrolyzed, but rates on arylamides are exceedingly low.. The catalysed reaction is Release of an N-terminal amino acid, preferentially leucine, but not glutamic or aspartic acids.. Presumably involved in the processing and regular turnover of intracellular proteins. Catalyzes the removal of unsubstituted N-terminal amino acids from various peptides. This Burkholderia mallei (strain SAVP1) protein is Probable cytosol aminopeptidase.